The primary structure comprises 223 residues: uncharacterized protein (223 aa).

The Tyr recombinase domain maps to 29–220 (KQTYKMFKED…AKEILKNIGD (192 aa)). Catalysis depends on residues Arg-71, Lys-103, His-170, Arg-173, and His-196. Tyr-205 serves as the catalytic O-(3'-phospho-DNA)-tyrosine intermediate.

It belongs to the 'phage' integrase family.

This is an uncharacterized protein from Methanocaldococcus jannaschii (strain ATCC 43067 / DSM 2661 / JAL-1 / JCM 10045 / NBRC 100440) (Methanococcus jannaschii).